A 619-amino-acid polypeptide reads, in one-letter code: Chaperone protein DnaK (619 aa).

Position 175 is a phosphothreonine; by autocatalysis (Thr175). The interval 578-619 (NGGAQGQGFDPNNMGGANAGAGATNNNDDNVVDADFEVQDDK) is disordered. Positions 589-606 (NNMGGANAGAGATNNNDD) are enriched in low complexity. Residues 607-619 (NVVDADFEVQDDK) are compositionally biased toward acidic residues.

This sequence belongs to the heat shock protein 70 family.

Its function is as follows. Acts as a chaperone. This is Chaperone protein DnaK from Clostridium perfringens (strain ATCC 13124 / DSM 756 / JCM 1290 / NCIMB 6125 / NCTC 8237 / Type A).